A 130-amino-acid chain; its full sequence is Aspartate 1-decarboxylase (130 aa).

The Schiff-base intermediate with substrate; via pyruvic acid role is filled by serine 25. Residue serine 25 is modified to Pyruvic acid (Ser). Threonine 57 lines the substrate pocket. Tyrosine 58 acts as the Proton donor in catalysis. 73 to 75 (GAT) is a binding site for substrate.

This sequence belongs to the PanD family. Heterooctamer of four alpha and four beta subunits. Pyruvate serves as cofactor. In terms of processing, is synthesized initially as an inactive proenzyme, which is activated by self-cleavage at a specific serine bond to produce a beta-subunit with a hydroxyl group at its C-terminus and an alpha-subunit with a pyruvoyl group at its N-terminus.

It localises to the cytoplasm. The enzyme catalyses L-aspartate + H(+) = beta-alanine + CO2. Its pathway is cofactor biosynthesis; (R)-pantothenate biosynthesis; beta-alanine from L-aspartate: step 1/1. Its function is as follows. Catalyzes the pyruvoyl-dependent decarboxylation of aspartate to produce beta-alanine. The sequence is that of Aspartate 1-decarboxylase from Lactiplantibacillus plantarum (strain ATCC BAA-793 / NCIMB 8826 / WCFS1) (Lactobacillus plantarum).